We begin with the raw amino-acid sequence, 259 residues long: MHIEVTGRGPDLVLIHGWALQGGVFAPLVQRLADQFTLHLVDLPGHGHSRDDTTPLRLPFVVNAIAAATPPAVWCGWSLGGLFALHAAATLPKVRGLAMIAATPRFVRGEDWPHAVEPAVFEQFGRELASDFGGTLERFLALDVMGSAHAREELRTLRQRLVERGAPTERALLEGLRLLESTDLRGALPTLGKPSLWIAGQRDRLVSPAAMQAAAALALGGQALTIAHGGHAPFLGHADEVAAALQHFVAGLSPADGGQ.

Substrate contacts are provided by residues Trp18, 78-79, and 139-143; these read SL and FLALD. Ser78 (nucleophile) is an active-site residue. Residues Asp203 and His231 contribute to the active site. His231 lines the substrate pocket.

The protein belongs to the AB hydrolase superfamily. Carboxylesterase BioH family. In terms of assembly, monomer.

The protein localises to the cytoplasm. The catalysed reaction is 6-carboxyhexanoyl-[ACP] methyl ester + H2O = 6-carboxyhexanoyl-[ACP] + methanol + H(+). It participates in cofactor biosynthesis; biotin biosynthesis. Its function is as follows. The physiological role of BioH is to remove the methyl group introduced by BioC when the pimeloyl moiety is complete. It allows to synthesize pimeloyl-ACP via the fatty acid synthetic pathway through the hydrolysis of the ester bonds of pimeloyl-ACP esters. This is Pimeloyl-[acyl-carrier protein] methyl ester esterase from Stenotrophomonas maltophilia (strain R551-3).